The primary structure comprises 440 residues: tRNA-2-methylthio-N(6)-dimethylallyladenosine synthase (440 aa).

The MTTase N-terminal domain maps to 2 to 118 (PKYYIITYGC…LPKILESLDG (117 aa)). [4Fe-4S] cluster is bound by residues C11, C47, C81, C155, C159, and C162. The Radical SAM core domain maps to 141 to 370 (RENKFQAWIP…ENLQRKIIYE (230 aa)). The TRAM domain occupies 373-436 (LSRVGKEEIV…LWSLKGEVIR (64 aa)).

This sequence belongs to the methylthiotransferase family. MiaB subfamily. As to quaternary structure, monomer. [4Fe-4S] cluster is required as a cofactor.

Its subcellular location is the cytoplasm. It catalyses the reaction N(6)-dimethylallyladenosine(37) in tRNA + (sulfur carrier)-SH + AH2 + 2 S-adenosyl-L-methionine = 2-methylsulfanyl-N(6)-dimethylallyladenosine(37) in tRNA + (sulfur carrier)-H + 5'-deoxyadenosine + L-methionine + A + S-adenosyl-L-homocysteine + 2 H(+). Catalyzes the methylthiolation of N6-(dimethylallyl)adenosine (i(6)A), leading to the formation of 2-methylthio-N6-(dimethylallyl)adenosine (ms(2)i(6)A) at position 37 in tRNAs that read codons beginning with uridine. The sequence is that of tRNA-2-methylthio-N(6)-dimethylallyladenosine synthase from Dictyoglomus thermophilum (strain ATCC 35947 / DSM 3960 / H-6-12).